Consider the following 469-residue polypeptide: Sulfate adenylyltransferase subunit 1 (469 aa).

The tr-type G domain occupies 22 to 236; it reads KDMLRVLTCG…LLNTVSVEQD (215 aa). Positions 31–38 are G1; the sequence is GSVDDGKS. 31-38 lines the GTP pocket; the sequence is GSVDDGKS. Positions 89–93 are G2; it reads GITID. The G3 stretch occupies residues 110-113; the sequence is DTPG. GTP-binding positions include 110–114 and 165–168; these read DTPGH and NKMD. The G4 stretch occupies residues 165–168; it reads NKMD. The tract at residues 202 to 204 is G5; sequence SAL.

Belongs to the TRAFAC class translation factor GTPase superfamily. Classic translation factor GTPase family. CysN/NodQ subfamily. As to quaternary structure, heterodimer composed of CysD, the smaller subunit, and CysN.

The enzyme catalyses sulfate + ATP + H(+) = adenosine 5'-phosphosulfate + diphosphate. The protein operates within sulfur metabolism; hydrogen sulfide biosynthesis; sulfite from sulfate: step 1/3. Functionally, with CysD forms the ATP sulfurylase (ATPS) that catalyzes the adenylation of sulfate producing adenosine 5'-phosphosulfate (APS) and diphosphate, the first enzymatic step in sulfur assimilation pathway. APS synthesis involves the formation of a high-energy phosphoric-sulfuric acid anhydride bond driven by GTP hydrolysis by CysN coupled to ATP hydrolysis by CysD. This is Sulfate adenylyltransferase subunit 1 from Shewanella woodyi (strain ATCC 51908 / MS32).